The chain runs to 283 residues: Probable 3-deoxy-manno-octulosonic acid transferase (283 aa).

It is found in the cytoplasm. The enzyme catalyses an alpha-Kdo-(2-&gt;4)-alpha-Kdo-(2-&gt;6)-lipid IVA + CMP-3-deoxy-beta-D-manno-octulosonate = an alpha-Kdo-(2-&gt;4)-alpha-Kdo-(2-&gt;4)-alpha-Kdo-(2-&gt;6)-lipid IVA + CMP + H(+). It catalyses the reaction alpha-Kdo-(2-&gt;4)-alpha-Kdo-(2-&gt;6)-lipid IVA (E. coli) + CMP-3-deoxy-beta-D-manno-octulosonate = alpha-Kdo-(2-&gt;4)-alpha-Kdo-(2-&gt;4)-alpha-Kdo-(2-&gt;6)-lipid IVA + CMP + H(+). It participates in bacterial outer membrane biogenesis; LPS core biosynthesis. The protein operates within bacterial outer membrane biogenesis; LOS core biosynthesis. Involved in the biosynthesis of the core oligosaccharide region of lipopolysaccharide (LPS). Required for the addition of 3-deoxy-D-manno-oct-2-ulosonic acid III (KdoIII) to the KdoII residue of the inner lipopolysaccharide core. May also play a role in a lipooligosaccharide (LOS) biosynthesis pathway. The polypeptide is Probable 3-deoxy-manno-octulosonic acid transferase (Escherichia coli (strain K12)).